A 91-amino-acid chain; its full sequence is Probable Fe(2+)-trafficking protein (91 aa).

Belongs to the Fe(2+)-trafficking protein family.

Could be a mediator in iron transactions between iron acquisition and iron-requiring processes, such as synthesis and/or repair of Fe-S clusters in biosynthetic enzymes. In Tolumonas auensis (strain DSM 9187 / NBRC 110442 / TA 4), this protein is Probable Fe(2+)-trafficking protein.